The sequence spans 483 residues: Aspartyl/glutamyl-tRNA(Asn/Gln) amidotransferase subunit B (483 aa).

This sequence belongs to the GatB/GatE family. GatB subfamily. As to quaternary structure, heterotrimer of A, B and C subunits.

The enzyme catalyses L-glutamyl-tRNA(Gln) + L-glutamine + ATP + H2O = L-glutaminyl-tRNA(Gln) + L-glutamate + ADP + phosphate + H(+). It carries out the reaction L-aspartyl-tRNA(Asn) + L-glutamine + ATP + H2O = L-asparaginyl-tRNA(Asn) + L-glutamate + ADP + phosphate + 2 H(+). Allows the formation of correctly charged Asn-tRNA(Asn) or Gln-tRNA(Gln) through the transamidation of misacylated Asp-tRNA(Asn) or Glu-tRNA(Gln) in organisms which lack either or both of asparaginyl-tRNA or glutaminyl-tRNA synthetases. The reaction takes place in the presence of glutamine and ATP through an activated phospho-Asp-tRNA(Asn) or phospho-Glu-tRNA(Gln). In Rickettsia bellii (strain RML369-C), this protein is Aspartyl/glutamyl-tRNA(Asn/Gln) amidotransferase subunit B.